A 279-amino-acid chain; its full sequence is NADPH-dependent 7-cyano-7-deazaguanine reductase (279 aa).

Position 86 to 88 (86 to 88 (IES)) interacts with substrate. An NADPH-binding site is contributed by 88 to 89 (SK). C187 serves as the catalytic Thioimide intermediate. D194 acts as the Proton donor in catalysis. 226-227 (HE) serves as a coordination point for substrate. 255–256 (RG) is a binding site for NADPH.

Belongs to the GTP cyclohydrolase I family. QueF type 2 subfamily. As to quaternary structure, homodimer.

The protein localises to the cytoplasm. It carries out the reaction 7-aminomethyl-7-carbaguanine + 2 NADP(+) = 7-cyano-7-deazaguanine + 2 NADPH + 3 H(+). The protein operates within tRNA modification; tRNA-queuosine biosynthesis. Functionally, catalyzes the NADPH-dependent reduction of 7-cyano-7-deazaguanine (preQ0) to 7-aminomethyl-7-deazaguanine (preQ1). This is NADPH-dependent 7-cyano-7-deazaguanine reductase from Haemophilus influenzae (strain PittEE).